The sequence spans 447 residues: GTPase Der (447 aa).

EngA-type G domains follow at residues 4 to 165 (KIIT…SIKE) and 180 to 357 (LQIV…KIWN). GTP-binding positions include 10 to 17 (GRPNVGKS), 57 to 61 (DTPGL), 119 to 122 (NKCE), 186 to 193 (GRPNAGKS), 233 to 237 (DTAGL), and 298 to 301 (NKWD). Residues 358 to 443 (KKITTGKLNE…PIRFTYVKNK (86 aa)) enclose the KH-like domain.

This sequence belongs to the TRAFAC class TrmE-Era-EngA-EngB-Septin-like GTPase superfamily. EngA (Der) GTPase family. As to quaternary structure, associates with the 50S ribosomal subunit.

Its function is as follows. GTPase that plays an essential role in the late steps of ribosome biogenesis. The sequence is that of GTPase Der from Rickettsia typhi (strain ATCC VR-144 / Wilmington).